The following is a 176-amino-acid chain: Isopentenyl-diphosphate Delta-isomerase (176 aa).

Mn(2+)-binding residues include H22 and H28. Residues L26–I160 enclose the Nudix hydrolase domain. C62 is a catalytic residue. H64 is a binding site for Mn(2+). E82 serves as a coordination point for Mg(2+). Mn(2+)-binding residues include E108 and E110. E110 is a catalytic residue.

This sequence belongs to the IPP isomerase type 1 family. Mg(2+) is required as a cofactor. Requires Mn(2+) as cofactor.

It is found in the cytoplasm. It catalyses the reaction isopentenyl diphosphate = dimethylallyl diphosphate. It participates in isoprenoid biosynthesis; dimethylallyl diphosphate biosynthesis; dimethylallyl diphosphate from isopentenyl diphosphate: step 1/1. It functions in the pathway porphyrin-containing compound metabolism; chlorophyll biosynthesis. Functionally, catalyzes the 1,3-allylic rearrangement of the homoallylic substrate isopentenyl (IPP) to its highly electrophilic allylic isomer, dimethylallyl diphosphate (DMAPP). The chain is Isopentenyl-diphosphate Delta-isomerase from Dinoroseobacter shibae (strain DSM 16493 / NCIMB 14021 / DFL 12).